We begin with the raw amino-acid sequence, 127 residues long: Modulator protein MzrA (127 aa).

Topologically, residues 1–10 are cytoplasmic; it reads MLKPRITARQ. A helical membrane pass occupies residues 11–31; it reads LIWISAFLLMLTILMMTWSTL. Residues 32–127 are Periplasmic-facing; the sequence is RQQESTLAIR…RLRESSHRFG (96 aa).

Belongs to the MzrA family. In terms of assembly, interacts with EnvZ.

It is found in the cell inner membrane. Its function is as follows. Modulates the activity of the EnvZ/OmpR two-component regulatory system, probably by directly modulating EnvZ enzymatic activity and increasing stability of phosphorylated OmpR. The protein is Modulator protein MzrA of Salmonella agona (strain SL483).